A 387-amino-acid chain; its full sequence is Phosphoglycerate kinase (387 aa).

Substrate-binding positions include 21–23 (DLN), arginine 36, 59–62 (HLGR), arginine 113, and arginine 146. Residues lysine 197, glutamate 314, and 340–343 (GGDT) each bind ATP.

The protein belongs to the phosphoglycerate kinase family. In terms of assembly, monomer.

Its subcellular location is the cytoplasm. The enzyme catalyses (2R)-3-phosphoglycerate + ATP = (2R)-3-phospho-glyceroyl phosphate + ADP. Its pathway is carbohydrate degradation; glycolysis; pyruvate from D-glyceraldehyde 3-phosphate: step 2/5. This chain is Phosphoglycerate kinase, found in Photorhabdus luminescens (Xenorhabdus luminescens).